The chain runs to 236 residues: Lipoarabinomannan carrier protein LprG (236 aa).

Residues 1-26 (MRTPRRHCRRIAVLAAVSIAATVVAG) form the signal peptide. A lipid anchor (N-palmitoyl cysteine) is attached at Cys27. Residue Cys27 is the site of S-diacylglycerol cysteine attachment.

This sequence belongs to the LppX/LprAFG lipoprotein family. In terms of processing, modified by Lgt on Cys-27 with an S-linked diacylglyceral, signal peptide is removed by LspA, Cys-27 is further modifed with a fatty acid on its amino group by Lnt yielding a triacylated protein.

Its subcellular location is the cell inner membrane. It localises to the secreted. The protein localises to the cell wall. In terms of biological role, helps membrane protein Mb1445c (P55) transport triacylglycerides (TAG) across the inner cell membrane into the periplasm and probably ultimately to the outer membrane. Binds TAG in its hydrophobic cavity and transfers it between lipid bilayers. TAG probably regulates lipid metabolism and growth regulation and plays a structural role in the outer membrane. Binds di- and triacylated phosphatidyl-myo-inositol mannosides (PIMs), and glycolipid lipoglycan modulins lipoarabinomannan (LAM) and lipomannan (LM), facilitating their recognition by TLR2. Required for activity of drug efflux transporter Mb1445c. Required, probably with Mb1445c, for normal surface localization of LAM. Constitutes a host TLR2 agonist (toll-like receptor). This Mycobacterium bovis (strain ATCC BAA-935 / AF2122/97) protein is Lipoarabinomannan carrier protein LprG.